A 319-amino-acid polypeptide reads, in one-letter code: uncharacterized protein (319 aa).

The 143-residue stretch at 36–178 (IIEFLLSFKG…MTVIHEERGF (143 aa)) folds into the SIS domain. Position 51–56 (51–56 (GIGKSG)) interacts with ATP. 2 consecutive CBS domains span residues 203 to 263 (MRSG…HLKT) and 268 to 319 (MTKN…MGVS).

This sequence belongs to the SIS family. GutQ/KpsF subfamily.

This is an uncharacterized protein from Rickettsia prowazekii (strain Madrid E).